The sequence spans 189 residues: UPF0301 protein PSPA7_0505 (189 aa).

Belongs to the UPF0301 (AlgH) family.

This is UPF0301 protein PSPA7_0505 from Pseudomonas paraeruginosa (strain DSM 24068 / PA7) (Pseudomonas aeruginosa (strain PA7)).